Here is a 232-residue protein sequence, read N- to C-terminus: 2,3,4,5-tetrahydropyridine-2,6-dicarboxylate N-acetyltransferase (232 aa).

It belongs to the transferase hexapeptide repeat family. DapH subfamily.

The enzyme catalyses (S)-2,3,4,5-tetrahydrodipicolinate + acetyl-CoA + H2O = L-2-acetamido-6-oxoheptanedioate + CoA. It functions in the pathway amino-acid biosynthesis; L-lysine biosynthesis via DAP pathway; LL-2,6-diaminopimelate from (S)-tetrahydrodipicolinate (acetylase route): step 1/3. Functionally, catalyzes the transfer of an acetyl group from acetyl-CoA to tetrahydrodipicolinate. The polypeptide is 2,3,4,5-tetrahydropyridine-2,6-dicarboxylate N-acetyltransferase (Streptococcus pneumoniae (strain CGSP14)).